A 465-amino-acid chain; its full sequence is UDP-N-acetylmuramate--L-alanine ligase (465 aa).

118-124 contacts ATP; it reads GTHGKTT.

It belongs to the MurCDEF family.

It is found in the cytoplasm. The catalysed reaction is UDP-N-acetyl-alpha-D-muramate + L-alanine + ATP = UDP-N-acetyl-alpha-D-muramoyl-L-alanine + ADP + phosphate + H(+). The protein operates within cell wall biogenesis; peptidoglycan biosynthesis. Functionally, cell wall formation. The sequence is that of UDP-N-acetylmuramate--L-alanine ligase from Ruegeria pomeroyi (strain ATCC 700808 / DSM 15171 / DSS-3) (Silicibacter pomeroyi).